The primary structure comprises 156 residues: S-ribosylhomocysteine lyase (156 aa).

Fe cation is bound by residues His-53, His-57, and Cys-122.

Belongs to the LuxS family. Homodimer. It depends on Fe cation as a cofactor.

It carries out the reaction S-(5-deoxy-D-ribos-5-yl)-L-homocysteine = (S)-4,5-dihydroxypentane-2,3-dione + L-homocysteine. In terms of biological role, involved in the synthesis of autoinducer 2 (AI-2) which is secreted by bacteria and is used to communicate both the cell density and the metabolic potential of the environment. The regulation of gene expression in response to changes in cell density is called quorum sensing. Catalyzes the transformation of S-ribosylhomocysteine (RHC) to homocysteine (HC) and 4,5-dihydroxy-2,3-pentadione (DPD). This chain is S-ribosylhomocysteine lyase, found in Finegoldia magna (strain ATCC 29328 / DSM 20472 / WAL 2508) (Peptostreptococcus magnus).